Here is a 451-residue protein sequence, read N- to C-terminus: Transcription factor TGAL8 (451 aa).

A compositionally biased stretch (polar residues) spans 1–22 (MAYPSTSGMIQASSSLHGSITR). Disordered stretches follow at residues 1 to 32 (MAYP…DMPS) and 70 to 151 (FPSQ…PKTL). The segment covering 141–150 (KGPKTPDPKT) has biased composition (basic and acidic residues). The region spanning 147–191 (DPKTLRRLAQNREAARKSRLRKKAYIQQLETGRIRLAHLEQEIQF) is the bZIP domain. The tract at residues 149-169 (KTLRRLAQNREAARKSRLRKK) is basic motif. Residues 175 to 189 (LETGRIRLAHLEQEI) are leucine-zipper. One can recognise a DOG1 domain in the interval 208 to 444 (AALFNLEYER…RALALFWTTT (237 aa)).

This sequence belongs to the bZIP family. As to quaternary structure, interacts with NPR5/NH4, NH5.1 and NH5.2.

The protein resides in the nucleus. Functionally, transcriptional regulator involved in defense response. The polypeptide is Transcription factor TGAL8 (Oryza sativa subsp. japonica (Rice)).